We begin with the raw amino-acid sequence, 213 residues long: N-(5'-phosphoribosyl)anthranilate isomerase (213 aa).

Belongs to the TrpF family.

The enzyme catalyses N-(5-phospho-beta-D-ribosyl)anthranilate = 1-(2-carboxyphenylamino)-1-deoxy-D-ribulose 5-phosphate. It functions in the pathway amino-acid biosynthesis; L-tryptophan biosynthesis; L-tryptophan from chorismate: step 3/5. The protein is N-(5'-phosphoribosyl)anthranilate isomerase of Methylibium petroleiphilum (strain ATCC BAA-1232 / LMG 22953 / PM1).